We begin with the raw amino-acid sequence, 772 residues long: Serine/threonine-protein kinase tousled-like 2 (772 aa).

The disordered stretch occupies residues 24–126 (GVSKGPLNSE…SNPLPRRVEQ (103 aa)). The span at 29–44 (PLNSESSNQSLCSVGS) shows a compositional bias: polar residues. Over residues 46 to 61 (SDKEVETPEKKQNDQR) the composition is skewed to basic and acidic residues. 6 positions are modified to phosphoserine: serine 73, serine 94, serine 99, serine 115, serine 117, and serine 134. Residues 180–208 (QNSPSSTGSGNTEHSCSSQKQISIQHRQT) are disordered. Positions 225-276 (NSDLEKKEGRIDDLLRANCDLRRQIDEQQKMLEKYKERLNRCVTMSKKLLIE) are required for interaction with TLK1 and DYNLL1/LC8. 2 coiled-coil regions span residues 225–276 (NSDL…LLIE) and 317–347 (AFQN…KRKP). Residues 342 to 385 (LAKRKPPAMGQAPPATNEQKQRKSKTNGAENETPSSGNTELKDT) form a disordered region. Over residues 367–380 (TNGAENETPSSGNT) the composition is skewed to polar residues. Residues 403 to 451 (HEQEEIFKLRLGHLKKEEAEIQAELERLERVRNLHIRELKRIHNEDNSQ) adopt a coiled-coil conformation. The Protein kinase domain maps to 462–741 (YLLLHLLGRG…VQQLACDPYL (280 aa)). ATP is bound by residues 468 to 476 (LGRGGFSEV) and lysine 491. Aspartate 592 serves as the catalytic Proton acceptor. Position 750 is a phosphoserine; by CHEK1 (serine 750).

The protein belongs to the protein kinase superfamily. Ser/Thr protein kinase family. Monomer. May form homodimers; homodimerization may enhance autophosphoylation and enzymatic activity. Heterodimer with TLK1. Interacts with YWHAZ; association with 14-3-3 proteins such as YWHAZ regulates subcellular location. May also interact with FEZ1/LZTS1 and FEZ2. Interacts with CHD7 and CHD8. Interacts with DYNLL1/LC8. The cofactor is Mg(2+). Post-translationally, phosphorylated at Ser-750, probably by CHEK1. In terms of processing, autophosphorylated; phosphorylation promotes the assembly of higher order oligomers and enzymatic activity. As to expression, detected in placenta, fetal liver, kidney, pancreas, heart and skeletal muscle. Highly expressed in testis. Detected in spleen, thymus, colon, ovary, small intestine, prostate and peripheral blood leukocytes. Almost undetectable in liver and lung.

It is found in the nucleus. The protein resides in the nucleoplasm. Its subcellular location is the cytoplasm. The protein localises to the perinuclear region. It localises to the cytoskeleton. The enzyme catalyses L-seryl-[protein] + ATP = O-phospho-L-seryl-[protein] + ADP + H(+). It catalyses the reaction L-threonyl-[protein] + ATP = O-phospho-L-threonyl-[protein] + ADP + H(+). Cell cycle-regulated, with maximal activity in the S-phase. Rapidly and transiently inhibited by phosphorylation following the generation of DNA double-stranded breaks during S-phase, probably by CHEK1, possibly at Ser-750. This inhibition is cell cycle checkpoint- and ATM-dependent. Functionally, serine/threonine-protein kinase involved in the process of chromatin assembly and probably also DNA replication, transcription, repair, and chromosome segregation. Phosphorylates the chromatin assembly factors ASF1A and ASF1B. Phosphorylation of ASF1A prevents its proteasome-mediated degradation, thereby enhancing chromatin assembly. Negative regulator of amino acid starvation-induced autophagy. The polypeptide is Serine/threonine-protein kinase tousled-like 2 (Homo sapiens (Human)).